Consider the following 143-residue polypeptide: Anti-sigma F factor (143 aa).

It belongs to the anti-sigma-factor family.

The catalysed reaction is L-seryl-[protein] + ATP = O-phospho-L-seryl-[protein] + ADP + H(+). It catalyses the reaction L-threonyl-[protein] + ATP = O-phospho-L-threonyl-[protein] + ADP + H(+). In terms of biological role, binds to sigma F and blocks its ability to form an RNA polymerase holoenzyme (E-sigma F). Phosphorylates SpoIIAA on a serine residue. This phosphorylation may enable SpoIIAA to act as an anti-anti-sigma factor that counteracts SpoIIAB and thus releases sigma F from inhibition. The sequence is that of Anti-sigma F factor from Clostridium beijerinckii (strain ATCC 51743 / NCIMB 8052) (Clostridium acetobutylicum).